The sequence spans 481 residues: Proline--tRNA ligase (481 aa).

Belongs to the class-II aminoacyl-tRNA synthetase family. ProS type 3 subfamily. Homodimer.

It is found in the cytoplasm. It catalyses the reaction tRNA(Pro) + L-proline + ATP = L-prolyl-tRNA(Pro) + AMP + diphosphate. In terms of biological role, catalyzes the attachment of proline to tRNA(Pro) in a two-step reaction: proline is first activated by ATP to form Pro-AMP and then transferred to the acceptor end of tRNA(Pro). The polypeptide is Proline--tRNA ligase (Chloroherpeton thalassium (strain ATCC 35110 / GB-78)).